We begin with the raw amino-acid sequence, 429 residues long: C4-dicarboxylate transport protein (429 aa).

The next 8 helical transmembrane spans lie at 9–29 (VLYV…HFYP), 45–65 (LIKM…IAGM), 79–99 (LLYF…ATHI), 149–169 (GEIL…AHLG), 185–205 (VLFG…FGAM), 223–243 (LIGT…GTIA), 308–328 (IYMT…LTWM), and 356–376 (AATL…ILGI).

The protein belongs to the dicarboxylate/amino acid:cation symporter (DAACS) (TC 2.A.23) family.

The protein resides in the cell inner membrane. In terms of biological role, responsible for the transport of dicarboxylates such as succinate, fumarate, and malate from the periplasm across the membrane. In Burkholderia ambifaria (strain ATCC BAA-244 / DSM 16087 / CCUG 44356 / LMG 19182 / AMMD) (Burkholderia cepacia (strain AMMD)), this protein is C4-dicarboxylate transport protein.